A 548-amino-acid polypeptide reads, in one-letter code: Frizzled-7-B (548 aa).

The first 18 residues, Met-1–Ser-18, serve as a signal peptide directing secretion. Over Ala-19–Trp-230 the chain is Extracellular. The FZ domain maps to Pro-31–Gln-150. Intrachain disulfides connect Cys-36/Cys-97, Cys-44/Cys-90, Cys-81/Cys-118, Cys-107/Cys-147, and Cys-111/Cys-135. Asn-50 is a glycosylation site (N-linked (GlcNAc...) asparagine). A glycan (N-linked (GlcNAc...) asparagine) is linked at Asn-151. The helical transmembrane segment at Val-231–Val-251 threads the bilayer. Residues Asp-252–Pro-262 are Cytoplasmic-facing. A helical transmembrane segment spans residues Ile-263–Leu-283. Topologically, residues Glu-284–Thr-311 are extracellular. Residues Ile-312 to Ala-332 traverse the membrane as a helical segment. Residues Leu-333 to Gln-353 lie on the Cytoplasmic side of the membrane. The helical transmembrane segment at Tyr-354–Gly-374 threads the bilayer. Residues Gln-375–Gly-397 are Extracellular-facing. A helical membrane pass occupies residues Phe-398–Phe-418. The Cytoplasmic portion of the chain corresponds to Val-419–Arg-444. The helical transmembrane segment at Ile-445 to Tyr-465 threads the bilayer. Residues Glu-466 to Thr-502 lie on the Extracellular side of the membrane. A helical membrane pass occupies residues Val-503–Trp-523. Residues Ser-524–Val-548 lie on the Cytoplasmic side of the membrane. The short motif at Lys-526–Trp-531 is the Lys-Thr-X-X-X-Trp motif, mediates interaction with the PDZ domain of Dvl family members element. The short motif at Thr-546 to Val-548 is the PDZ-binding element.

Belongs to the G-protein coupled receptor Fz/Smo family. As to quaternary structure, interacts with wnt11 and sdc4. The extracellular domain interacts with the extracellular domain of pcdh8/papc. Interacts (via C-terminus) with dvl1 (via PDZ domain). As to expression, during gastrulation, broadly expressed on the dorsal side of the embryo in deep mesodermal cells surrounding the blastopore lip and in presumptive anterior neuroectoderm. During neurulation, localized to the cranial neural crest and heart field where expression is retained at later stages in addition to new areas of expression in the neural tube, pronephros and tailbud. At tailbud stage, expressed in the pronephric duct, and broad head expression becomes more restricted to the hindbrain. In tadpoles, strongly expressed in the eye and the pericardium and myocardium of the developing heart.

The protein localises to the cell membrane. Its subcellular location is the endosome membrane. Functionally, receptor for Wnt proteins. Acts in both canonical and non-canonical Wnt pathways. Although different papers report differing Wnt preferences, wnt5a, wnt8b and wnt11 have been proposed as synergists. In the canonical Wnt pathway, acts via beta-catenin to promote the expression of the dorsal genes siamois, twin and nodal3 and to establish the dorsal axis of the embryo and induce dorsal mesoderm formation. In a non-canonical Wnt/planar cell polarity (PCP) pathway, acts with sdc4 and dvl2/dsh to regulate convergent extension cell movements during gastrulation. Triggers phosphorylation of dvl2/dsh and its translocation to the plasma membrane. In a third branch of Wnt signaling, acts in a non-canonical pathway via trimeric G proteins, and independently of dvl2/dsh, to recruit protein kinase C (PKC) to the membrane and thus activate PKC. PKC signaling controls cell sorting and tissue separation during gastrulation. This Xenopus laevis (African clawed frog) protein is Frizzled-7-B (fzd7-b).